The sequence spans 2197 residues: uncharacterized protein (2197 aa).

S2 carries the N-acetylserine modification. An HEAT repeat occupies 2159–2195 (TIPFLAELLEDVELSVKSLAQDIIKQMEEMSGESLAE).

Belongs to the HEATR1/UTP10 family.

The protein localises to the nucleus. The protein resides in the nucleolus. Involved in nucleolar processing of pre-18S ribosomal RNA. Involved in ribosome biosynthesis. This is an uncharacterized protein from Arabidopsis thaliana (Mouse-ear cress).